Consider the following 352-residue polypeptide: MAGLKTFDAFPKTEEQYKKKSTKGGLTSLLTYLFLLFIAWTEFGEYFGGYIDQQYVVDSQVRDTVQINMDIYVNTKCDWLQINVRDQTMDRKLVLEELQLEEMPFFIPYDTKVNDINEIITPELDEILGEAIPAEFREKLDTRSFFDESDPNKAHLPEFNGCHVFGSIPVNRVSGELQITAKSLGYVASRKAPLEELKFNHVINEFSFGDFYPYIDNPLDNTAQFNQDEPLTTYVYYTSVVPTLFKKLGAEVDTNQYSVNDYRYLYKDVAAKGDKMPGIFFKYNFEPLSIVVSDVRLSFIQFLVRLVAICSFLVYCASWIFTLLDMALITIMGPKWSLRYQPDDKTKGILDR.

Topologically, residues 1–23 (MAGLKTFDAFPKTEEQYKKKSTK) are cytoplasmic. A helical transmembrane segment spans residues 24–44 (GGLTSLLTYLFLLFIAWTEFG). The Lumenal segment spans residues 45–311 (EYFGGYIDQQ…FLVRLVAICS (267 aa)). The helical transmembrane segment at 312–332 (FLVYCASWIFTLLDMALITIM) threads the bilayer. The Cytoplasmic segment spans residues 333-352 (GPKWSLRYQPDDKTKGILDR). An Isoleucine-leucine motif motif is present at residues 349 to 350 (IL).

Belongs to the ERGIC family. In terms of assembly, interacts with ERV46.

Its subcellular location is the endoplasmic reticulum membrane. The protein resides in the golgi apparatus membrane. The protein localises to the cytoplasmic vesicle. It is found in the COPII-coated vesicle membrane. Functionally, constituent of COPII-coated endoplasmic reticulum-derived transport vesicles. Required for efficient transport of a subset of secretory proteins to the Golgi. The C-terminal Ile-Leu motif is required for exit from the endoplasmic reticulum. Facilitates retrograde transport from the Golgi to the endoplasmic reticulum. This is ER-derived vesicles protein ERV41 (ERV41) from Saccharomyces cerevisiae (strain ATCC 204508 / S288c) (Baker's yeast).